The primary structure comprises 257 residues: MEACVSSLLVLALGALSVGSSFGTQIIGGREVIPHSRPYMASLQRNGSHLCGGVLVHPKWVLTAAHCLAQRMAQLRLVLGLHTLDSPGLTFHIKAAIQHPRYKPVPALENDLALLQLDGKVKPSRTIRPLALPSKRQVVAAGTRCSMAGWGLTHQGGRLSRVLRELDLQVLDTRMCNNSRFWNGSLSPSMVCLAADSKDQAPCKGDSGGPLVCGKGRVLARVLSFSSRVCTDIFKPPVATAVAPYVSWIRKVTGRSA.

A signal peptide spans 1-23 (MEACVSSLLVLALGALSVGSSFG). A propeptide spans 24 to 25 (TQ) (activation peptide). The Peptidase S1 domain maps to 26-254 (IIGGREVIPH…YVSWIRKVTG (229 aa)). C51 and C67 are oxidised to a cystine. Residues H66 and D111 each act as charge relay system in the active site. Cystine bridges form between C145-C213, C176-C192, and C203-C230. N177 is a glycosylation site (N-linked (GlcNAc...) asparagine). S207 acts as the Charge relay system in catalysis.

This sequence belongs to the peptidase S1 family. Granzyme subfamily. As to expression, highly and constitutively expressed in activated natural killer (NK) cells.

Its subcellular location is the secreted. It localises to the cytoplasmic granule. In terms of biological role, cleaves peptide substrates after methionine, leucine, and norleucine. Physiological substrates include EZR, alpha-tubulins and the apoptosis inhibitor BIRC5/Survivin. Promotes caspase activation and subsequent apoptosis of target cells. This chain is Granzyme M (GZMM), found in Homo sapiens (Human).